Here is a 323-residue protein sequence, read N- to C-terminus: Beta-ketoacyl-[acyl-carrier-protein] synthase III (323 aa).

Residues cysteine 112 and histidine 248 contribute to the active site. An ACP-binding region spans residues 249 to 253 (QANRR). The active site involves asparagine 278.

The protein belongs to the thiolase-like superfamily. FabH family. As to quaternary structure, homodimer.

It is found in the cytoplasm. It carries out the reaction malonyl-[ACP] + acetyl-CoA + H(+) = 3-oxobutanoyl-[ACP] + CO2 + CoA. It functions in the pathway lipid metabolism; fatty acid biosynthesis. Catalyzes the condensation reaction of fatty acid synthesis by the addition to an acyl acceptor of two carbons from malonyl-ACP. Catalyzes the first condensation reaction which initiates fatty acid synthesis and may therefore play a role in governing the total rate of fatty acid production. Possesses both acetoacetyl-ACP synthase and acetyl transacylase activities. Its substrate specificity determines the biosynthesis of branched-chain and/or straight-chain of fatty acids. This is Beta-ketoacyl-[acyl-carrier-protein] synthase III from Streptococcus agalactiae serotype Ia (strain ATCC 27591 / A909 / CDC SS700).